The sequence spans 270 residues: Acyl-[acyl-carrier-protein]--UDP-N-acetylglucosamine O-acyltransferase (270 aa).

The protein belongs to the transferase hexapeptide repeat family. LpxA subfamily. In terms of assembly, homotrimer.

It is found in the cytoplasm. It catalyses the reaction a (3R)-hydroxyacyl-[ACP] + UDP-N-acetyl-alpha-D-glucosamine = a UDP-3-O-[(3R)-3-hydroxyacyl]-N-acetyl-alpha-D-glucosamine + holo-[ACP]. Its pathway is glycolipid biosynthesis; lipid IV(A) biosynthesis; lipid IV(A) from (3R)-3-hydroxytetradecanoyl-[acyl-carrier-protein] and UDP-N-acetyl-alpha-D-glucosamine: step 1/6. Involved in the biosynthesis of lipid A, a phosphorylated glycolipid that anchors the lipopolysaccharide to the outer membrane of the cell. The chain is Acyl-[acyl-carrier-protein]--UDP-N-acetylglucosamine O-acyltransferase from Helicobacter pylori (strain G27).